Consider the following 430-residue polypeptide: Glutamate-1-semialdehyde 2,1-aminomutase 2 (430 aa).

N6-(pyridoxal phosphate)lysine is present on K268.

Belongs to the class-III pyridoxal-phosphate-dependent aminotransferase family. HemL subfamily. In terms of assembly, homodimer. The cofactor is pyridoxal 5'-phosphate.

The protein localises to the cytoplasm. The catalysed reaction is (S)-4-amino-5-oxopentanoate = 5-aminolevulinate. Its pathway is porphyrin-containing compound metabolism; protoporphyrin-IX biosynthesis; 5-aminolevulinate from L-glutamyl-tRNA(Glu): step 2/2. This is Glutamate-1-semialdehyde 2,1-aminomutase 2 from Shouchella clausii (strain KSM-K16) (Alkalihalobacillus clausii).